Here is a 262-residue protein sequence, read N- to C-terminus: Pyridoxine 5'-phosphate synthase (262 aa).

Residue Asn6 coordinates 3-amino-2-oxopropyl phosphate. 8–9 (DH) is a binding site for 1-deoxy-D-xylulose 5-phosphate. Arg17 provides a ligand contact to 3-amino-2-oxopropyl phosphate. His43 (proton acceptor) is an active-site residue. 2 residues coordinate 1-deoxy-D-xylulose 5-phosphate: Arg45 and His50. Glu70 serves as the catalytic Proton acceptor. Thr102 contributes to the 1-deoxy-D-xylulose 5-phosphate binding site. The active-site Proton donor is His215. 3-amino-2-oxopropyl phosphate-binding positions include Gly216 and 237–238 (GH).

Belongs to the PNP synthase family. Homooctamer; tetramer of dimers.

It localises to the cytoplasm. It catalyses the reaction 3-amino-2-oxopropyl phosphate + 1-deoxy-D-xylulose 5-phosphate = pyridoxine 5'-phosphate + phosphate + 2 H2O + H(+). It participates in cofactor biosynthesis; pyridoxine 5'-phosphate biosynthesis; pyridoxine 5'-phosphate from D-erythrose 4-phosphate: step 5/5. In terms of biological role, catalyzes the complicated ring closure reaction between the two acyclic compounds 1-deoxy-D-xylulose-5-phosphate (DXP) and 3-amino-2-oxopropyl phosphate (1-amino-acetone-3-phosphate or AAP) to form pyridoxine 5'-phosphate (PNP) and inorganic phosphate. The chain is Pyridoxine 5'-phosphate synthase from Helicobacter pylori (strain J99 / ATCC 700824) (Campylobacter pylori J99).